We begin with the raw amino-acid sequence, 225 residues long: Rho GDP-dissociation inhibitor 3 (225 aa).

It belongs to the Rho GDI family.

It is found in the cytoplasm. In terms of biological role, inhibits GDP/GTP exchange reaction of RhoB. Interacts specifically with the GDP- and GTP-bound forms of post-translationally processed Rhob and Rhog proteins, both of which show a growth-regulated expression in mammalian cells. Stimulates the release of the GDP-bound but not the GTP-bound RhoB protein. Also inhibits the GDP/GTP exchange of RhoB but shows less ability to inhibit the dissociation of prebound GTP. This is Rho GDP-dissociation inhibitor 3 (ARHGDIG) from Bos taurus (Bovine).